A 732-amino-acid polypeptide reads, in one-letter code: Translation initiation factor eIF2B subunit epsilon (732 aa).

Positions 559 to 726 (GEEEEDFGVE…QEADEEDSDE (168 aa)) constitute a W2 domain.

This sequence belongs to the eIF-2B gamma/epsilon subunits family. Component of the translation initiation factor 2B (eIF2B) complex which is a heterodecamer of two sets of five different subunits: alpha, beta, gamma, delta and epsilon. Subunits alpha, beta and delta comprise a regulatory subcomplex and subunits epsilon and gamma comprise a catalytic subcomplex. Within the complex, the hexameric regulatory complex resides at the center, with the two heterodimeric catalytic subcomplexes bound on opposite sides.

The protein localises to the cytoplasm. It is found in the cytosol. Its function is as follows. Acts as a component of the translation initiation factor 2B (eIF2B) complex, which catalyzes the exchange of GDP for GTP on the eukaryotic initiation factor 2 (eIF2) complex gamma subunit. Its guanine nucleotide exchange factor activity is repressed when bound to eIF2 complex phosphorylated on the alpha subunit, thereby limiting the amount of methionyl-initiator methionine tRNA available to the ribosome and consequently global translation is repressed. The sequence is that of Translation initiation factor eIF2B subunit epsilon (GCD6) from Candida albicans (strain SC5314 / ATCC MYA-2876) (Yeast).